A 506-amino-acid chain; its full sequence is Sodium-coupled neutral amino acid symporter 2 (506 aa).

Residues 1–23 (MKKAEMGRFNISPDEDSSSYSSN) are disordered. Topologically, residues 1–76 (MKKAEMGRFN…HPGTTSFGMS (76 aa)) are cytoplasmic. The interval 1 to 96 (MKKAEMGRFN…SGILGLSYAM (96 aa)) is regulates protein turnover upon amino acid deprivation. 4 positions are modified to phosphoserine: Ser12, Ser21, Ser22, and Ser55. A helical membrane pass occupies residues 77–96 (VFNLSNAIVGSGILGLSYAM). Residue Asn82 coordinates Na(+). The Extracellular segment spans residues 97-102 (ANTGIA). The helical transmembrane segment at 103-123 (LFIILLTFVSIFSLYSVHLLL) threads the bilayer. Residues 124 to 158 (KTANEGGSLLYEQLGHKAFGMVGKLTASGSITMQN) are Cytoplasmic-facing. Residues 159–177 (IGAMSSYLFIVKYELPLVI) traverse the membrane as a helical segment. Topologically, residues 178 to 188 (QALMNIEDTNG) are extracellular. The chain crosses the membrane as a helical span at residues 189–209 (LWYLNGDYLVLLVSLVLILPL). Residues 210–217 (SLLRNLGY) lie on the Cytoplasmic side of the membrane. A helical membrane pass occupies residues 218–238 (LGYTSGLSLLCMMFFLIVVIF). Over 239-292 (KKFQISCPAEIAFLVNETVNSSLTQPATFLPDMGFNRTESDSCQPRYFIFNSQT) the chain is Extracellular. Cys245 and Cys281 form a disulfide bridge. Residues Asn258 and Asn274 are each glycosylated (N-linked (GlcNAc...) asparagine). A helical membrane pass occupies residues 293–313 (VYAVPILTFSFVCHPAILPIY). At 314-329 (EELKGRSRRRMMNVSK) the chain is on the cytoplasmic side. A helical membrane pass occupies residues 330–350 (ISFFAMFLMYLLAALFGYLTF). At 351-371 (YGHVESELLHTYSSVMETDIL) the chain is on the extracellular side. A helical transmembrane segment spans residues 372–392 (LLIVRLAVLVAVTLTVPVVIF). Position 386 (Thr386) interacts with Na(+). The Cytoplasmic portion of the chain corresponds to 393-413 (PIRSSITHLLCASKEFSWWRH). Residues 414–434 (SVITVSILVFTNLLVIFVPNI) traverse the membrane as a helical segment. At 435-436 (RD) the chain is on the extracellular side. Residues 437–457 (IFGFIGASAAAMLIFILPSAF) form a helical membrane-spanning segment. Residues 458–472 (YIKLVKKEPMKSVQK) are Cytoplasmic-facing. Residues 473–495 (IGAMFFLLSGIVVMTGSMALIVL) traverse the membrane as a helical segment. Topologically, residues 496-506 (DWVHNAPGGGH) are extracellular.

It belongs to the amino acid/polyamine transporter 2 family. In terms of processing, polyubiquitination by NEDD4L regulates the degradation and the activity of SLC38A2.

The protein resides in the cell membrane. The enzyme catalyses L-alanine(in) + Na(+)(in) = L-alanine(out) + Na(+)(out). The catalysed reaction is glycine(in) + Na(+)(in) = glycine(out) + Na(+)(out). It carries out the reaction L-serine(in) + Na(+)(in) = L-serine(out) + Na(+)(out). It catalyses the reaction L-proline(in) + Na(+)(in) = L-proline(out) + Na(+)(out). The enzyme catalyses L-methionine(in) + Na(+)(in) = L-methionine(out) + Na(+)(out). The catalysed reaction is L-histidine(in) + Na(+)(in) = L-histidine(out) + Na(+)(out). It carries out the reaction L-asparagine(in) + Na(+)(in) = L-asparagine(out) + Na(+)(out). It catalyses the reaction L-glutamine(in) + Na(+)(in) = L-glutamine(out) + Na(+)(out). The enzyme catalyses L-threonine(in) + Na(+)(in) = L-threonine(out) + Na(+)(out). The catalysed reaction is L-leucine(in) + Na(+)(in) = L-leucine(out) + Na(+)(out). It carries out the reaction L-phenylalanine(in) + Na(+)(in) = L-phenylalanine(out) + Na(+)(out). Its activity is regulated as follows. Inhibited by N-methyl-D-glucamine. Inhibited by choline. Allosteric regulation of sodium ions binding by pH. In terms of biological role, symporter that cotransports neutral amino acids and sodium ions from the extracellular to the intracellular side of the cell membrane. The transport is pH-sensitive, Li(+)-intolerant, electrogenic, driven by the Na(+) electrochemical gradient and cotransports of neutral amino acids and sodium ions with a stoichiometry of 1:1. May function in the transport of amino acids at the blood-brain barrier. May function in the transport of amino acids in the supply of maternal nutrients to the fetus through the placenta. Maintains a key metabolic glutamine/glutamate balance underpinning retrograde signaling by dendritic release of the neurotransmitter glutamate. Transports L-proline in differentiating osteoblasts for the efficient synthesis of proline-enriched proteins and provides proline essential for osteoblast differentiation and bone formation during bone development. In Bos taurus (Bovine), this protein is Sodium-coupled neutral amino acid symporter 2.